A 72-amino-acid chain; its full sequence is Translation initiation factor IF-1 (72 aa).

An S1-like domain is found at 1–72; that stretch reads MSKDDVIEVE…TRGRIIYRHK (72 aa).

The protein belongs to the IF-1 family. As to quaternary structure, component of the 30S ribosomal translation pre-initiation complex which assembles on the 30S ribosome in the order IF-2 and IF-3, IF-1 and N-formylmethionyl-tRNA(fMet); mRNA recruitment can occur at any time during PIC assembly.

Its subcellular location is the cytoplasm. One of the essential components for the initiation of protein synthesis. Stabilizes the binding of IF-2 and IF-3 on the 30S subunit to which N-formylmethionyl-tRNA(fMet) subsequently binds. Helps modulate mRNA selection, yielding the 30S pre-initiation complex (PIC). Upon addition of the 50S ribosomal subunit IF-1, IF-2 and IF-3 are released leaving the mature 70S translation initiation complex. This chain is Translation initiation factor IF-1, found in Carboxydothermus hydrogenoformans (strain ATCC BAA-161 / DSM 6008 / Z-2901).